A 195-amino-acid chain; its full sequence is Imidazoleglycerol-phosphate dehydratase (195 aa).

Belongs to the imidazoleglycerol-phosphate dehydratase family.

It is found in the cytoplasm. It carries out the reaction D-erythro-1-(imidazol-4-yl)glycerol 3-phosphate = 3-(imidazol-4-yl)-2-oxopropyl phosphate + H2O. The protein operates within amino-acid biosynthesis; L-histidine biosynthesis; L-histidine from 5-phospho-alpha-D-ribose 1-diphosphate: step 6/9. The polypeptide is Imidazoleglycerol-phosphate dehydratase (Ruegeria sp. (strain TM1040) (Silicibacter sp.)).